We begin with the raw amino-acid sequence, 364 residues long: UDP-N-acetylglucosamine--N-acetylmuramyl-(pentapeptide) pyrophosphoryl-undecaprenol N-acetylglucosamine transferase 1 (364 aa).

Residues 10–12 (TGG), N124, S195, I250, and Q295 contribute to the UDP-N-acetyl-alpha-D-glucosamine site.

It belongs to the glycosyltransferase 28 family. MurG subfamily.

It is found in the cell membrane. The catalysed reaction is di-trans,octa-cis-undecaprenyl diphospho-N-acetyl-alpha-D-muramoyl-L-alanyl-D-glutamyl-meso-2,6-diaminopimeloyl-D-alanyl-D-alanine + UDP-N-acetyl-alpha-D-glucosamine = di-trans,octa-cis-undecaprenyl diphospho-[N-acetyl-alpha-D-glucosaminyl-(1-&gt;4)]-N-acetyl-alpha-D-muramoyl-L-alanyl-D-glutamyl-meso-2,6-diaminopimeloyl-D-alanyl-D-alanine + UDP + H(+). It functions in the pathway cell wall biogenesis; peptidoglycan biosynthesis. Functionally, cell wall formation. Catalyzes the transfer of a GlcNAc subunit on undecaprenyl-pyrophosphoryl-MurNAc-pentapeptide (lipid intermediate I) to form undecaprenyl-pyrophosphoryl-MurNAc-(pentapeptide)GlcNAc (lipid intermediate II). The protein is UDP-N-acetylglucosamine--N-acetylmuramyl-(pentapeptide) pyrophosphoryl-undecaprenol N-acetylglucosamine transferase 1 of Bacillus cereus (strain ATCC 14579 / DSM 31 / CCUG 7414 / JCM 2152 / NBRC 15305 / NCIMB 9373 / NCTC 2599 / NRRL B-3711).